Here is a 477-residue protein sequence, read N- to C-terminus: RNA pseudouridine synthase 6, chloroplastic (477 aa).

The transit peptide at 1-52 (MPKAAASLASLLPQLWHRPVQPPPFLHRALSSSSPLLRRHRAALHSPAAPLS) directs the protein to the chloroplast. Residues 98–205 (EVAVDFISRS…FPRCYEIDWK (108 aa)) enclose the S4 RNA-binding domain. The active site involves Asp-258.

It belongs to the pseudouridine synthase RluA family.

Its subcellular location is the plastid. It is found in the chloroplast. It carries out the reaction a uridine in RNA = a pseudouridine in RNA. This chain is RNA pseudouridine synthase 6, chloroplastic, found in Oryza sativa subsp. japonica (Rice).